Consider the following 481-residue polypeptide: MSNSYLSFFVLSSILVLTLIFFFMKRKKTKFNLPPGSMGLPFIGETFGYLKPCSATTMGAYMENRIARYGTIYKTKLFGEDTIVSADAELNRLIFQNHGKLFDTNYPKSIAEILGKWSILTIVGDVHRELRNVSLNFMSYARLKTHFLKDSENSALLVLNSWKENCTIEAQSEAKKFTFNVITKQIMSLDPRNPETEELRDEYLSFMNGVVSAPFNLPGTPYRKALKSRKIILKFIEGKMEERIKRNQEGKKDLEENDDLLNWVLKHTNLSTDQILDLVLGMVFGGYETSSAATALAMYFLPGCPKAIQQLREEHQAIARSKKKAGEVELTWDDYKKMEFTHCVVNETLRLGNVVRFVHRKSIKDVRFKGYDIPCGWNVMPVISAVHLNPSNFEDPQHFNPWRWQSGNWASLNSNFMPFGGGAKICPGMELAKLEVAVFIHHIILKYNWDLVDVDDKPIIHPLVDFPKGLRIRVQRQPTLI.

The chain crosses the membrane as a helical span at residues 4 to 24 (SYLSFFVLSSILVLTLIFFFM). Residue Cys-426 participates in heme binding.

It belongs to the cytochrome P450 family. As to expression, mainly expressed in leaves and seed pods and, at low levels, in flowers and stems.

Its subcellular location is the membrane. Its pathway is steroid metabolism; cholesterol metabolism. Functionally, involved in the biosynthesis of spiroketal steroid and saponin natural products from cholesterol such as diosgenin and analogs (e.g. furostanol and spirostanol), plant defense compounds used as main precursors for the industrial production of steroid hormones. During the 5,6-spiroketalization of cholesterol, catalyzes the hydroxylation of cholesterol to form 16S,22S-dihydroxycholesterol and, possibly, the subsequent conversion of 16S,22S-dihydroxycholesterol into 16-oxo-22-hydroxy-cholesterol and 16-hydroxy-22-oxo-cholesterol. 16-hydroxy-22-oxo-cholesterol submit a spontaneous reaction leading to the production of furostanol-type steroid diastereomers, precursors of diosgenin. The polypeptide is Cholesterol 16,22-dihydroxylase CYP90G4 (Trigonella foenum-graecum (Fenugreek)).